Here is a 470-residue protein sequence, read N- to C-terminus: MIKPRTPPGIMELLPREQIAFQRMLDVIRRNYERFGFLPIETPVFELSDVLLTKSGGETERQVYFVQSTGALANAAAAADEGAENGGLPELALRFDLTVPLARYVAEHEHDLSFPFRRYQMQRVYRGERAQRGRFREFYQCDIDVIGKDALSIRYDAEVLAVIHAVFAELGIGDFKVQLNNRKLLRGFFESLGVAEGELQLAVLREVDKIDKRGADYVRDTLVGEGFGIAAEQVARILAFVAVRSEGHADALAQLQALEASVGASATLGEGIAELREVLELVKALGVPERAYCLNFSIARGLDYYTGTVYETTLTDHPQIGSICSGGRYESLASHYTKSRLPGVGISIGLTRLFWQLREAGLIQGIAESSVQAMVALMDETRLDDVLDIARRLRIAGINTEVQMEPKKVGKQFQYAARAGIRFVVLAGDDELARGVVAVKDLVREQQFDVARDELASTLLVELEQAKAMP.

Belongs to the class-II aminoacyl-tRNA synthetase family. Homodimer.

Its subcellular location is the cytoplasm. It catalyses the reaction tRNA(His) + L-histidine + ATP = L-histidyl-tRNA(His) + AMP + diphosphate + H(+). The sequence is that of Histidine--tRNA ligase from Xanthomonas oryzae pv. oryzae (strain PXO99A).